A 932-amino-acid polypeptide reads, in one-letter code: Protocadherin gamma-A12 (932 aa).

The first 29 residues, 1–29 (MIPARLHRDYKGLVLLGILLGTLWETGCT), serve as a signal peptide directing secretion. 6 consecutive Cadherin domains span residues 30–133 (QIRY…APYF), 134–242 (RESE…APAF), 243–347 (AQPE…APEV), 348–452 (VLTS…PPVF), 453–562 (PQAS…APEI), and 570–683 (DGST…SPAN). Residues 30 to 692 (QIRYSVPEEL…NSETSDLTLY (663 aa)) are Extracellular-facing. Residues Asn-265, Asn-419, and Asn-545 are each glycosylated (N-linked (GlcNAc...) asparagine). Residues 693–713 (LVVAVAAVSCVFLAFVILLLA) traverse the membrane as a helical segment. Topologically, residues 714–932 (LRLRRWHKSR…KKKSGKKEKK (219 aa)) are cytoplasmic. Disordered regions lie at residues 803 to 841 (GHGL…WPNN) and 902 to 932 (ATLT…KEKK). Residues 816-841 (WRFSQAQRPGTSGSQNGDDTGTWPNN) show a composition bias toward polar residues. The segment covering 922–932 (NKKKSGKKEKK) has biased composition (basic residues).

Its subcellular location is the cell membrane. Potential calcium-dependent cell-adhesion protein. May be involved in the establishment and maintenance of specific neuronal connections in the brain. This is Protocadherin gamma-A12 (PCDHGA12) from Pan troglodytes (Chimpanzee).